We begin with the raw amino-acid sequence, 117 residues long: UPF0344 protein GTNG_0604 (117 aa).

The next 4 helical transmembrane spans lie at 1–21, 39–59, 61–81, and 97–117; these read MTHA…IAVS, LFYI…ASIS, LYWL…MVLV, and VIAL…FDLF.

It belongs to the UPF0344 family.

The protein localises to the cell membrane. The protein is UPF0344 protein GTNG_0604 of Geobacillus thermodenitrificans (strain NG80-2).